The following is a 45-amino-acid chain: Large ribosomal subunit protein bL34c (45 aa).

Over residues 1 to 10 the composition is skewed to polar residues; it reads MSKGFSNGTN. The disordered stretch occupies residues 1-45; that stretch reads MSKGFSNGTNIKRVRKSGFRARMSNSSGRKILNSRRRKQRKKIAL. Residues 32–45 are compositionally biased toward basic residues; sequence LNSRRRKQRKKIAL.

It belongs to the bacterial ribosomal protein bL34 family.

It localises to the plastid. The protein resides in the chloroplast. The chain is Large ribosomal subunit protein bL34c from Gracilaria tenuistipitata var. liui (Red alga).